The primary structure comprises 187 residues: Probable nicotinate-nucleotide adenylyltransferase (187 aa).

It belongs to the NadD family.

The enzyme catalyses nicotinate beta-D-ribonucleotide + ATP + H(+) = deamido-NAD(+) + diphosphate. It functions in the pathway cofactor biosynthesis; NAD(+) biosynthesis; deamido-NAD(+) from nicotinate D-ribonucleotide: step 1/1. Catalyzes the reversible adenylation of nicotinate mononucleotide (NaMN) to nicotinic acid adenine dinucleotide (NaAD). This chain is Probable nicotinate-nucleotide adenylyltransferase, found in Anaeromyxobacter dehalogenans (strain 2CP-C).